Consider the following 371-residue polypeptide: MKKTRNVASSPIECVHLQTKPTTTLVRSFFFFLFNSQTISSFIIFYLFLCSFFWFCQSPNLTNPSPPPLSVAPLRGDANSPPPESSSSPATKSSLMISSRDPNALFSGGGISFLAGVRTVKFSYGYSSLKGKRATMEDYFETRISDVNGQMVAFFGVFDGHGGARTAEYLKNNLFKNLVSHDDFISDTKKAIVEVFKQTDEEYLIEEAGQPKNAGSTAATAFLIGDKLIVANVGDSRVVASRNGSAVPLSDDHKPDRSDERQRIEDAGGFIIWAGTWRVGGILAVSRAFGDKQLKPYVIAEPEIQEEDISTLEFIVVASDGLWNVLSNKDAVAIVRDISDAETAARKLVQEGYARGSCDNITCIVVRFEVS.

A helical transmembrane segment spans residues 29 to 49 (FFFFLFNSQTISSFIIFYLFL). Residues 67-95 (PPLSVAPLRGDANSPPPESSSSPATKSSL) are disordered. Residues 85 to 94 (SSSSPATKSS) are compositionally biased toward low complexity. The PPM-type phosphatase domain occupies 123 to 368 (SYGYSSLKGK…DNITCIVVRF (246 aa)). 4 residues coordinate Mn(2+): Asp-159, Gly-160, Asp-320, and Asp-359.

This sequence belongs to the PP2C family. The cofactor is Mg(2+). Mn(2+) is required as a cofactor.

Its subcellular location is the membrane. The enzyme catalyses O-phospho-L-seryl-[protein] + H2O = L-seryl-[protein] + phosphate. The catalysed reaction is O-phospho-L-threonyl-[protein] + H2O = L-threonyl-[protein] + phosphate. This chain is Probable protein phosphatase 2C 11, found in Arabidopsis thaliana (Mouse-ear cress).